Consider the following 84-residue polypeptide: Small ribosomal subunit protein uS17c (84 aa).

It belongs to the universal ribosomal protein uS17 family. Part of the 30S ribosomal subunit.

The protein localises to the plastid. Its subcellular location is the chloroplast. Its function is as follows. One of the primary rRNA binding proteins, it binds specifically to the 5'-end of 16S ribosomal RNA. The chain is Small ribosomal subunit protein uS17c (rps17) from Thalassiosira pseudonana (Marine diatom).